Reading from the N-terminus, the 556-residue chain is CTP synthase (556 aa).

The interval 1–266 (MKYIFVTGGV…GKVVEDLLGL (266 aa)) is amidoligase domain. Ser12 is a CTP binding site. Ser12 lines the UTP pocket. 13 to 18 (SLGKGV) is an ATP binding site. Tyr53 serves as a coordination point for L-glutamine. Asp70 provides a ligand contact to ATP. Residues Asp70 and Glu140 each contribute to the Mg(2+) site. CTP contacts are provided by residues 147–149 (DIE), 187–192 (KTKPTQ), and Lys223. UTP is bound by residues 187 to 192 (KTKPTQ) and Lys223. The 254-residue stretch at 291–544 (TIAIAGKYTE…VKAALRGQSS (254 aa)) folds into the Glutamine amidotransferase type-1 domain. Residue Gly356 coordinates L-glutamine. Cys383 acts as the Nucleophile; for glutamine hydrolysis in catalysis. Residues 384 to 387 (LGMQ), Glu407, and Arg467 contribute to the L-glutamine site. Active-site residues include His517 and Glu519.

The protein belongs to the CTP synthase family. As to quaternary structure, homotetramer.

The enzyme catalyses UTP + L-glutamine + ATP + H2O = CTP + L-glutamate + ADP + phosphate + 2 H(+). It carries out the reaction L-glutamine + H2O = L-glutamate + NH4(+). The catalysed reaction is UTP + NH4(+) + ATP = CTP + ADP + phosphate + 2 H(+). Its pathway is pyrimidine metabolism; CTP biosynthesis via de novo pathway; CTP from UDP: step 2/2. Allosterically activated by GTP, when glutamine is the substrate; GTP has no effect on the reaction when ammonia is the substrate. The allosteric effector GTP functions by stabilizing the protein conformation that binds the tetrahedral intermediate(s) formed during glutamine hydrolysis. Inhibited by the product CTP, via allosteric rather than competitive inhibition. Its function is as follows. Catalyzes the ATP-dependent amination of UTP to CTP with either L-glutamine or ammonia as the source of nitrogen. Regulates intracellular CTP levels through interactions with the four ribonucleotide triphosphates. The chain is CTP synthase from Deinococcus deserti (strain DSM 17065 / CIP 109153 / LMG 22923 / VCD115).